A 577-amino-acid polypeptide reads, in one-letter code: Dihydroxy-acid dehydratase (577 aa).

The span at 1–10 (MLKRSFDKSK) shows a compositional bias: basic and acidic residues. Residues 1 to 22 (MLKRSFDKSKLPSRHVTEGPSR) form a disordered region. Position 56 (C56) interacts with [2Fe-2S] cluster. D88 is a binding site for Mg(2+). C129 serves as a coordination point for [2Fe-2S] cluster. D130 and K131 together coordinate Mg(2+). Residue K131 is modified to N6-carboxylysine. Residue C201 participates in [2Fe-2S] cluster binding. Position 453 (E453) interacts with Mg(2+). The active-site Proton acceptor is the S479.

Belongs to the IlvD/Edd family. Homodimer. Requires [2Fe-2S] cluster as cofactor. The cofactor is Mg(2+).

It carries out the reaction (2R)-2,3-dihydroxy-3-methylbutanoate = 3-methyl-2-oxobutanoate + H2O. The catalysed reaction is (2R,3R)-2,3-dihydroxy-3-methylpentanoate = (S)-3-methyl-2-oxopentanoate + H2O. The protein operates within amino-acid biosynthesis; L-isoleucine biosynthesis; L-isoleucine from 2-oxobutanoate: step 3/4. It functions in the pathway amino-acid biosynthesis; L-valine biosynthesis; L-valine from pyruvate: step 3/4. In terms of biological role, functions in the biosynthesis of branched-chain amino acids. Catalyzes the dehydration of (2R,3R)-2,3-dihydroxy-3-methylpentanoate (2,3-dihydroxy-3-methylvalerate) into 2-oxo-3-methylpentanoate (2-oxo-3-methylvalerate) and of (2R)-2,3-dihydroxy-3-methylbutanoate (2,3-dihydroxyisovalerate) into 2-oxo-3-methylbutanoate (2-oxoisovalerate), the penultimate precursor to L-isoleucine and L-valine, respectively. This Dinoroseobacter shibae (strain DSM 16493 / NCIMB 14021 / DFL 12) protein is Dihydroxy-acid dehydratase.